The primary structure comprises 293 residues: Probable endonuclease 4 (293 aa).

H77, H118, E153, D187, H190, H221, D234, H236, and E266 together coordinate Zn(2+).

This sequence belongs to the AP endonuclease 2 family. It depends on Zn(2+) as a cofactor.

It carries out the reaction Endonucleolytic cleavage to 5'-phosphooligonucleotide end-products.. Its function is as follows. Endonuclease IV plays a role in DNA repair. It cleaves phosphodiester bonds at apurinic or apyrimidinic (AP) sites, generating a 3'-hydroxyl group and a 5'-terminal sugar phosphate. The protein is Probable endonuclease 4 of Mesoplasma florum (strain ATCC 33453 / NBRC 100688 / NCTC 11704 / L1) (Acholeplasma florum).